The following is a 219-amino-acid chain: ATP-dependent dethiobiotin synthetase BioD (219 aa).

14–19 is an ATP binding site; the sequence is DVGKTY. Thr18 is a Mg(2+) binding site. Lys37 is a catalytic residue. Ser41 is a binding site for substrate. Residues Asp54, 114 to 117, and 175 to 176 each bind ATP; these read EGAG and NN. Mg(2+)-binding residues include Asp54 and Glu114.

This sequence belongs to the dethiobiotin synthetase family. Homodimer. The cofactor is Mg(2+).

The protein resides in the cytoplasm. It catalyses the reaction (7R,8S)-7,8-diammoniononanoate + CO2 + ATP = (4R,5S)-dethiobiotin + ADP + phosphate + 3 H(+). The protein operates within cofactor biosynthesis; biotin biosynthesis; biotin from 7,8-diaminononanoate: step 1/2. Its function is as follows. Catalyzes a mechanistically unusual reaction, the ATP-dependent insertion of CO2 between the N7 and N8 nitrogen atoms of 7,8-diaminopelargonic acid (DAPA, also called 7,8-diammoniononanoate) to form a ureido ring. This chain is ATP-dependent dethiobiotin synthetase BioD, found in Fusobacterium nucleatum subsp. nucleatum (strain ATCC 25586 / DSM 15643 / BCRC 10681 / CIP 101130 / JCM 8532 / KCTC 2640 / LMG 13131 / VPI 4355).